The following is a 209-amino-acid chain: MAGSSEQQLVANAAATTVAGNGSRFAVTCGLLRQYMKEHSGSNGGGGFLPAVTAMSLMTGGADAEEEAPEVRKTMELFPQQAGTLKDTQERKEITEKAQLTIFYGGSVVVFDDFPAEKAGELMKLAGSRDSTAAAAVSDAGAAAGQPCLPDMPIARKVSLQRFLEKRKNRIVVAEPLPESEKKEAESSKRAKKDDGGASWLQVNPTLSL.

In terms of domain architecture, Tify spans Glu93–Ser128. The short motif at Pro153–Leu177 is the Jas element. Positions Ala155–Arg162 match the Nuclear localization signal motif. Residues Glu175–Leu209 form a disordered region. Residues Glu179 to Gly196 are compositionally biased toward basic and acidic residues.

Belongs to the TIFY/JAZ family. Post-translationally, ubiquitinated. Targeted for degradation by the SCF(COI1) E3 ubiquitin ligase-proteasome pathway during jasmonate signaling.

The protein localises to the nucleus. Its function is as follows. Repressor of jasmonate responses. The chain is Protein TIFY 11c from Oryza sativa subsp. indica (Rice).